Reading from the N-terminus, the 277-residue chain is Large ribosomal subunit protein uL2 (277 aa).

Disordered regions lie at residues 35-58 and 213-277; these read QPLPKRAGRNNQGKLTVRHHGGGH and WKGI…RKRK.

Belongs to the universal ribosomal protein uL2 family. In terms of assembly, part of the 50S ribosomal subunit. Forms a bridge to the 30S subunit in the 70S ribosome.

One of the primary rRNA binding proteins. Required for association of the 30S and 50S subunits to form the 70S ribosome, for tRNA binding and peptide bond formation. It has been suggested to have peptidyltransferase activity; this is somewhat controversial. Makes several contacts with the 16S rRNA in the 70S ribosome. The sequence is that of Large ribosomal subunit protein uL2 from Staphylococcus carnosus (strain TM300).